The sequence spans 152 residues: UPF0266 membrane protein YobD (152 aa).

Transmembrane regions (helical) follow at residues 6 to 26 (LVLI…QFIM), 45 to 65 (IDSV…VTNH), and 67 to 87 (AQIT…IFWI).

It belongs to the UPF0266 family.

It localises to the cell inner membrane. The sequence is that of UPF0266 membrane protein YobD from Escherichia fergusonii (strain ATCC 35469 / DSM 13698 / CCUG 18766 / IAM 14443 / JCM 21226 / LMG 7866 / NBRC 102419 / NCTC 12128 / CDC 0568-73).